We begin with the raw amino-acid sequence, 671 residues long: DNA ligase (671 aa).

NAD(+) contacts are provided by residues 32 to 36 (DAEYD), 81 to 82 (SL), and Glu113. The active-site N6-AMP-lysine intermediate is the Lys115. NAD(+) is bound by residues Arg136, Glu173, Lys290, and Lys314. Zn(2+) is bound by residues Cys408, Cys411, Cys426, and Cys432. The BRCT domain maps to 593 to 671 (EIDSPFAGKT…EAEMIRLLDA (79 aa)).

Belongs to the NAD-dependent DNA ligase family. LigA subfamily. Mg(2+) is required as a cofactor. The cofactor is Mn(2+).

The catalysed reaction is NAD(+) + (deoxyribonucleotide)n-3'-hydroxyl + 5'-phospho-(deoxyribonucleotide)m = (deoxyribonucleotide)n+m + AMP + beta-nicotinamide D-nucleotide.. Functionally, DNA ligase that catalyzes the formation of phosphodiester linkages between 5'-phosphoryl and 3'-hydroxyl groups in double-stranded DNA using NAD as a coenzyme and as the energy source for the reaction. It is essential for DNA replication and repair of damaged DNA. The polypeptide is DNA ligase (Salmonella schwarzengrund (strain CVM19633)).